Consider the following 452-residue polypeptide: Tylactone mycaminosyltransferase (452 aa).

Positions 1–16 (MRRALDDRRRGPHGPE) are enriched in basic and acidic residues. The segment at 1 to 20 (MRRALDDRRRGPHGPEGKPP) is disordered.

It belongs to the glycosyltransferase 28 family.

The enzyme catalyses tylactone + dTDP-alpha-D-mycaminose = 5-O-beta-D-mycaminosyltylactone + dTDP + H(+). It participates in antibiotic biosynthesis; tylosin biosynthesis. With respect to regulation, the activity of TylM2 is substantially increased by the addition of the accessory protein TylM3. Functionally, involved in the biosynthesis of the macrolide antibiotic tylosin derived from the polyketide lactone tylactone. Catalyzes the transfer of alpha-D-mycaminosyl from dTDP-alpha-D-mycaminose to the 5-hydroxyl group of tylactone to yield 5-O-mycaminosytylactone. It can also accept 16-membered tylactone and 12-membered ring macrolide. The sequence is that of Tylactone mycaminosyltransferase from Streptomyces fradiae (Streptomyces roseoflavus).